A 1368-amino-acid chain; its full sequence is Mediator of RNA polymerase II transcription subunit 23 (1368 aa).

A disordered region spans residues 1343–1368; sequence VPPQAMNSGSPAPQSNQVPVSLPVTQ. Over residues 1347–1368 the composition is skewed to polar residues; the sequence is AMNSGSPAPQSNQVPVSLPVTQ.

This sequence belongs to the Mediator complex subunit 23 family. In terms of assembly, interacts with ELK1. Component of the Mediator complex, which is composed of MED1, MED4, MED6, MED7, MED8, MED9, MED10, MED11, MED12, MED13, MED13L, MED14, MED15, MED16, MED17, MED18, MED19, MED20, MED21, MED22, MED23, MED24, MED25, MED26, MED27, MED29, MED30, MED31, CCNC, CDK8 and CDC2L6/CDK11. The MED12, MED13, CCNC and CDK8 subunits form a distinct module termed the CDK8 module. Mediator containing the CDK8 module is less active than Mediator lacking this module in supporting transcriptional activation. Individual preparations of the Mediator complex lacking one or more distinct subunits have been variously termed ARC, CRSP, DRIP, PC2, SMCC and TRAP. Interacts with CEBPB (when not methylated), CTNNB1, and GLI3. Interacts with the adenovirus E1A protein.

The protein resides in the nucleus. In terms of biological role, required for transcriptional activation subsequent to the assembly of the pre-initiation complex. Component of the Mediator complex, a coactivator involved in the regulated transcription of nearly all RNA polymerase II-dependent genes. Mediator functions as a bridge to convey information from gene-specific regulatory proteins to the basal RNA polymerase II transcription machinery. Mediator is recruited to promoters by direct interactions with regulatory proteins and serves as a scaffold for the assembly of a functional pre-initiation complex with RNA polymerase II and the general transcription factors. Required for transcriptional activation by adenovirus E1A protein. Required for ELK1-dependent transcriptional activation in response to activated Ras signaling. The chain is Mediator of RNA polymerase II transcription subunit 23 (MED23) from Homo sapiens (Human).